We begin with the raw amino-acid sequence, 806 residues long: MSKLTTGSFSIEDLESVQITINNVIGAAKEAADEKAKDLGPMGPSAWPGLATYRDDWNLKLLDRYEPVITPMCDQCCYCTYGPCDLSNNKRGACGIDMLGHNGREFFLRVITGTACHAAHGRHLLDHLIEVFGEDLPLKLGQSDVLTPNITITTGQRPMTLGEIKPAMEHTEEQLTQLLATVHAGQESAEIDYDSKALFSGSLDHVGMEISDIVQIAALDFPKADPEAPLIEMGVGTIDKEKPFLCVIGHNVGGVTYMMDYMEEHDLTGKMELGGLCCTAIDLTRYKEADRRAPYTKVIGSMSQELKIIRSGLPDVIVVDEQCVRGDIVPEAQKLGIPVIASNAKIMYGLPNRDEQDVDATIEELKSGAIPGAVILDYDKLGEISVRLTQEMHPLREAAGLRKIASDEQMKEWVDKCADCGSCYLVCPEELEIPEAMKHAKEGDYSYLVDLHDQCIGCRRCEQVCKKEIPILSVIEKASQKVIAEEKGWMRAGRGQVSDAEIRAEGLNLVMGTTPGIIAIIGCPNYGDGAKSVYYIAEEFLKRNFIVVGTGCGAMDMGMYKDENGQTLYERFPGGFQSGGLVNIGSCVSNAHITGAAQKVAGIFGGRTMEGNLAEIADYVLNRVGACGLAWGAFSQKASSIGTGCNIYGIPAVLGPHSSKYRRALISKNYDDEKWKVYDARSGEEMAIPPAPEFLLITAETWQEAIPMMAKACIRPSDNSMGRSIKLTHWMELHQKYIGGMPEDWWKFIRTEADLPLAKRAELMKKLEEEHGWEIDWKRKKIISGPKIKFDVSAQPTNLKRLCKGA.

The [4Fe-4S] cluster site is built by cysteine 73, cysteine 76, cysteine 77, cysteine 79, cysteine 84, and cysteine 94. Histidine 117 contributes to the CO binding site. The [Ni-4Fe-4S] cluster site is built by histidine 250, cysteine 278, and cysteine 323. 4Fe-4S ferredoxin-type domains lie at 407 to 436 and 445 to 475; these read DEQM…IPEA and YSYL…LSVI. 8 residues coordinate [4Fe-4S] cluster: cysteine 417, cysteine 420, cysteine 423, cysteine 427, cysteine 455, cysteine 458, cysteine 461, and cysteine 465. Residues cysteine 523, cysteine 552, and cysteine 587 each coordinate [Ni-4Fe-4S] cluster.

Belongs to the Ni-containing carbon monoxide dehydrogenase family. Heterotetramer of two alpha and two epsilon subunits. The ACDS complex is made up of alpha, epsilon, beta, gamma and delta subunits with a probable stoichiometry of (alpha(2)epsilon(2))(4)-beta(8)-(gamma(1)delta(1))(8). It depends on [4Fe-4S] cluster as a cofactor. Requires [Ni-4Fe-4S] cluster as cofactor.

The catalysed reaction is CO + 2 oxidized [2Fe-2S]-[ferredoxin] + H2O = 2 reduced [2Fe-2S]-[ferredoxin] + CO2 + 2 H(+). Its pathway is one-carbon metabolism; methanogenesis from acetate. Its function is as follows. Part of the ACDS complex that catalyzes the reversible cleavage of acetyl-CoA, allowing growth on acetate as sole source of carbon and energy. The alpha-epsilon subcomponent functions as a carbon monoxide dehydrogenase. This is Acetyl-CoA decarbonylase/synthase complex subunit alpha 1 from Methanosarcina thermophila.